The following is a 236-amino-acid chain: Purine nucleoside phosphorylase DeoD-type (236 aa).

Residue H5 coordinates a purine D-ribonucleoside. Phosphate is bound by residues G21, R25, R44, and 88–91 (RVGT). A purine D-ribonucleoside is bound by residues 180-182 (EME) and 204-205 (SD). The active-site Proton donor is the D205.

The protein belongs to the PNP/UDP phosphorylase family. In terms of assembly, homohexamer; trimer of homodimers.

The catalysed reaction is a purine D-ribonucleoside + phosphate = a purine nucleobase + alpha-D-ribose 1-phosphate. It catalyses the reaction a purine 2'-deoxy-D-ribonucleoside + phosphate = a purine nucleobase + 2-deoxy-alpha-D-ribose 1-phosphate. Its function is as follows. Catalyzes the reversible phosphorolytic breakdown of the N-glycosidic bond in the beta-(deoxy)ribonucleoside molecules, with the formation of the corresponding free purine bases and pentose-1-phosphate. This chain is Purine nucleoside phosphorylase DeoD-type, found in Shewanella baltica (strain OS155 / ATCC BAA-1091).